A 91-amino-acid chain; its full sequence is PqqA binding protein (91 aa).

Belongs to the PqqD family. Monomer. Interacts with PqqE.

Its pathway is cofactor biosynthesis; pyrroloquinoline quinone biosynthesis. Functionally, functions as a PqqA binding protein and presents PqqA to PqqE, in the pyrroloquinoline quinone (PQQ) biosynthetic pathway. The protein is PqqA binding protein of Pseudomonas entomophila (strain L48).